The primary structure comprises 768 residues: Solute carrier family 45 member 4 (768 aa).

The interval 1–32 (MKMAPQNADPESMQVQELSVPLPDPQKAGGAE) is disordered. 6 consecutive transmembrane segments (helical) span residues 63–83 (EFCY…IGLP), 86–106 (YYSL…PLIG), 123–143 (ILAL…GSAI), 155–175 (PIGI…ADAT), 196–216 (LNIH…LGGL), and 233–253 (VLFF…LFSI). 2 disordered regions span residues 259-284 (SPQQ…PAFP) and 379-419 (NEAK…RHAF). S424 and S454 each carry phosphoserine. The disordered stretch occupies residues 460–489 (DMQKRQRQHRHRNQSGATTSSGDTESEEGE). Positions 473 to 482 (QSGATTSSGD) are enriched in low complexity. Residue S485 is modified to Phosphoserine. Helical transmembrane passes span 518–538 (TWFS…QVIF), 560–580 (MGCW…ALLQ), 592–612 (VIYV…AMFP), 614–634 (VYVA…ISYC), 666–686 (ILSC…GGVV), and 695–715 (IPMV…FLVI). Residues 726–768 (EQKGLSSPLAGEGRAGGNSEKPTVLKLTRKEGLQGPVETESVV) are disordered. Residue S732 is modified to Phosphoserine.

It belongs to the glycoside-pentoside-hexuronide (GPH) cation symporter transporter (TC 2.A.2) family.

The protein localises to the membrane. It carries out the reaction sucrose(out) + H(+)(out) = sucrose(in) + H(+)(in). Functionally, proton-associated sucrose transporter. May be able to transport also glucose and fructose. This is Solute carrier family 45 member 4 from Homo sapiens (Human).